Consider the following 188-residue polypeptide: MMSLWIAIGALSTLALVSGVVLGFAARRFQVDEDPVVEQVDAILPQSQCGQCGYPGCRPYAEAVSTGGEKINKCAPGGEQVMLKLAELLAVEPQPLDGDESAAHPQRKVAFIDEANCIGCTKCIQACPVDAIIGATRAMHTVLSDLCTGCDLCVAPCPTDCIEMIPVATTTANWKWDLNTIPVKNLPN.

The interval 1–26 (MMSLWIAIGALSTLALVSGVVLGFAA) is hydrophobic. The 60-residue stretch at 32–91 (DEDPVVEQVDAILPQSQCGQCGYPGCRPYAEAVSTGGEKINKCAPGGEQVMLKLAELLAV) folds into the 4Fe-4S domain. Positions 49, 52, 57, 74, 117, 120, 123, 127, 147, 150, 153, and 157 each coordinate [4Fe-4S] cluster. 4Fe-4S ferredoxin-type domains follow at residues 108 to 137 (KVAF…GATR) and 138 to 167 (AMHT…MIPV).

This sequence belongs to the 4Fe4S bacterial-type ferredoxin family. RnfB subfamily. In terms of assembly, the complex is composed of six subunits: RnfA, RnfB, RnfC, RnfD, RnfE and RnfG. It depends on [4Fe-4S] cluster as a cofactor.

The protein resides in the cell inner membrane. Functionally, part of a membrane-bound complex that couples electron transfer with translocation of ions across the membrane. This is Ion-translocating oxidoreductase complex subunit B from Yersinia pestis bv. Antiqua (strain Antiqua).